The primary structure comprises 237 residues: Probable transcriptional regulatory protein WS1016 (237 aa).

Belongs to the TACO1 family.

It localises to the cytoplasm. This is Probable transcriptional regulatory protein WS1016 from Wolinella succinogenes (strain ATCC 29543 / DSM 1740 / CCUG 13145 / JCM 31913 / LMG 7466 / NCTC 11488 / FDC 602W) (Vibrio succinogenes).